We begin with the raw amino-acid sequence, 413 residues long: Lipoyl synthase, mitochondrial (413 aa).

The N-terminal 33 residues, 1-33 (MAAATNRFRALYSSSRVATPQAGSASYLSYRGY), are a transit peptide targeting the mitochondrion. [4Fe-4S] cluster-binding residues include cysteine 133, cysteine 138, cysteine 144, cysteine 164, cysteine 168, cysteine 171, and serine 379. Residues 147-368 (GGDKAAATAT…RQRALDMGFL (222 aa)) form the Radical SAM core domain.

This sequence belongs to the radical SAM superfamily. Lipoyl synthase family. It depends on [4Fe-4S] cluster as a cofactor.

It localises to the mitochondrion. The catalysed reaction is [[Fe-S] cluster scaffold protein carrying a second [4Fe-4S](2+) cluster] + N(6)-octanoyl-L-lysyl-[protein] + 2 oxidized [2Fe-2S]-[ferredoxin] + 2 S-adenosyl-L-methionine + 4 H(+) = [[Fe-S] cluster scaffold protein] + N(6)-[(R)-dihydrolipoyl]-L-lysyl-[protein] + 4 Fe(3+) + 2 hydrogen sulfide + 2 5'-deoxyadenosine + 2 L-methionine + 2 reduced [2Fe-2S]-[ferredoxin]. It participates in protein modification; protein lipoylation via endogenous pathway; protein N(6)-(lipoyl)lysine from octanoyl-[acyl-carrier-protein]: step 2/2. In terms of biological role, catalyzes the radical-mediated insertion of two sulfur atoms into the C-6 and C-8 positions of the octanoyl moiety bound to the lipoyl domains of lipoate-dependent enzymes, thereby converting the octanoylated domains into lipoylated derivatives. This is Lipoyl synthase, mitochondrial from Emericella nidulans (strain FGSC A4 / ATCC 38163 / CBS 112.46 / NRRL 194 / M139) (Aspergillus nidulans).